The sequence spans 394 residues: Tubby-like F-box protein 2 (394 aa).

The segment at S21 to P44 is disordered. A compositionally biased stretch (polar residues) spans S26–P44. In terms of domain architecture, F-box spans S46–G101. 2 disordered regions span residues A200–S225 and I268–R297.

This sequence belongs to the TUB family. Ubiquitous.

The sequence is that of Tubby-like F-box protein 2 from Arabidopsis thaliana (Mouse-ear cress).